The primary structure comprises 465 residues: tRNA modification GTPase MnmE (465 aa).

Residues R23, E81, and K120 each coordinate (6S)-5-formyl-5,6,7,8-tetrahydrofolate. The region spanning G217–G389 is the TrmE-type G domain. K(+) is bound at residue N227. Residues N227–S232, T246–T252, and D271–G274 contribute to the GTP site. Residue S231 coordinates Mg(2+). 3 residues coordinate K(+): T246, V248, and T251. T252 provides a ligand contact to Mg(2+). K465 is a (6S)-5-formyl-5,6,7,8-tetrahydrofolate binding site.

The protein belongs to the TRAFAC class TrmE-Era-EngA-EngB-Septin-like GTPase superfamily. TrmE GTPase family. Homodimer. Heterotetramer of two MnmE and two MnmG subunits. It depends on K(+) as a cofactor.

Its subcellular location is the cytoplasm. Functionally, exhibits a very high intrinsic GTPase hydrolysis rate. Involved in the addition of a carboxymethylaminomethyl (cmnm) group at the wobble position (U34) of certain tRNAs, forming tRNA-cmnm(5)s(2)U34. This chain is tRNA modification GTPase MnmE, found in Psychrobacter sp. (strain PRwf-1).